We begin with the raw amino-acid sequence, 130 residues long: Large-conductance mechanosensitive channel (130 aa).

The next 2 membrane-spanning stretches (helical) occupy residues 14–34 (IIDL…VTSF) and 73–93 (FVDF…LVKF).

Belongs to the MscL family. Homopentamer.

The protein localises to the cell membrane. Functionally, channel that opens in response to stretch forces in the membrane lipid bilayer. May participate in the regulation of osmotic pressure changes within the cell. The chain is Large-conductance mechanosensitive channel from Oceanobacillus iheyensis (strain DSM 14371 / CIP 107618 / JCM 11309 / KCTC 3954 / HTE831).